Here is a 1057-residue protein sequence, read N- to C-terminus: Probable sucrose-phosphate synthase 1 (1057 aa).

The span at 103–115 shows a compositional bias: basic and acidic residues; sequence RRLERERGRREAT. Disordered stretches follow at residues 103 to 143, 439 to 459, and 670 to 693; these read RRLE…STRS, PQDG…ASPD, and RHPQ…GDSL. Over residues 442 to 452 the composition is skewed to acidic residues; that stretch reads GDMDGETEGNE.

The protein belongs to the glycosyltransferase 1 family. In terms of assembly, homodimer or homotetramer.

The catalysed reaction is beta-D-fructose 6-phosphate + UDP-alpha-D-glucose = sucrose 6(F)-phosphate + UDP + H(+). The protein operates within glycan biosynthesis; sucrose biosynthesis; sucrose from D-fructose 6-phosphate and UDP-alpha-D-glucose: step 1/2. With respect to regulation, activity is regulated by phosphorylation and moderated by concentration of metabolites and light. In terms of biological role, plays a role in photosynthetic sucrose synthesis by catalyzing the rate-limiting step of sucrose biosynthesis from UDP-glucose and fructose- 6-phosphate. Involved in the regulation of carbon partitioning in the leaves of plants. May regulate the synthesis of sucrose and therefore play a major role as a limiting factor in the export of photoassimilates out of the leaf. Plays a role for sucrose availability that is essential for plant growth and fiber elongation. In Citrus unshiu (Satsuma mandarin), this protein is Probable sucrose-phosphate synthase 1 (SPS1).